A 333-amino-acid polypeptide reads, in one-letter code: Ribosomal RNA small subunit methyltransferase H (333 aa).

S-adenosyl-L-methionine is bound by residues 39-41, Asp-57, Phe-84, Asp-101, and Gln-108; that span reads GGY.

Belongs to the methyltransferase superfamily. RsmH family.

It localises to the cytoplasm. It catalyses the reaction cytidine(1402) in 16S rRNA + S-adenosyl-L-methionine = N(4)-methylcytidine(1402) in 16S rRNA + S-adenosyl-L-homocysteine + H(+). Functionally, specifically methylates the N4 position of cytidine in position 1402 (C1402) of 16S rRNA. The sequence is that of Ribosomal RNA small subunit methyltransferase H from Dinoroseobacter shibae (strain DSM 16493 / NCIMB 14021 / DFL 12).